A 96-amino-acid chain; its full sequence is MSAVTPVLDGLAIRLYIQPKASRDQIVGLHGDELKVAITAPPVDGQANAHLIKFLAKQFKVAKGNVTIEKGELGRHKQLRIVNPQQIPDVVAALIE.

The protein belongs to the UPF0235 family.

The protein is UPF0235 protein Spro_4033 of Serratia proteamaculans (strain 568).